The primary structure comprises 301 residues: Acidic endochitinase (301 aa).

Residues 1 to 25 (MARTPQSTPLLISLSVLALLQTSYA) form the signal peptide. The region spanning 26–301 (GGIAIYWGQN…GYSSSIKSSV (276 aa)) is the GH18 domain. Disulfide bonds link cysteine 45-cysteine 92 and cysteine 75-cysteine 82. The active-site Proton donor is the glutamate 152. Residues cysteine 187 and cysteine 216 are joined by a disulfide bond.

Belongs to the glycosyl hydrolase 18 family. Chitinase class II subfamily.

It catalyses the reaction Random endo-hydrolysis of N-acetyl-beta-D-glucosaminide (1-&gt;4)-beta-linkages in chitin and chitodextrins.. Its function is as follows. Defense against chitin containing fungal pathogens. This is Acidic endochitinase (CHIT3) from Vitis vinifera (Grape).